The following is a 168-amino-acid chain: S-ribosylhomocysteine lyase (168 aa).

Fe cation-binding residues include His54, His58, and Cys128.

This sequence belongs to the LuxS family. In terms of assembly, homodimer. Fe cation is required as a cofactor.

It catalyses the reaction S-(5-deoxy-D-ribos-5-yl)-L-homocysteine = (S)-4,5-dihydroxypentane-2,3-dione + L-homocysteine. In terms of biological role, involved in the synthesis of autoinducer 2 (AI-2) which is secreted by bacteria and is used to communicate both the cell density and the metabolic potential of the environment. The regulation of gene expression in response to changes in cell density is called quorum sensing. Catalyzes the transformation of S-ribosylhomocysteine (RHC) to homocysteine (HC) and 4,5-dihydroxy-2,3-pentadione (DPD). This is S-ribosylhomocysteine lyase from Neisseria meningitidis serogroup C / serotype 2a (strain ATCC 700532 / DSM 15464 / FAM18).